A 645-amino-acid chain; its full sequence is Acetyl-coenzyme A synthetase (645 aa).

Residues 190-193 (RGGR) and Thr308 each bind CoA. ATP contacts are provided by residues 384–386 (GEP), 408–413 (DTWWQT), Asp497, and Arg512. A CoA-binding site is contributed by Ser520. Arg523 contacts ATP. Positions 534, 536, and 539 each coordinate Mg(2+). Lys606 is subject to N6-acetyllysine.

This sequence belongs to the ATP-dependent AMP-binding enzyme family. Mg(2+) is required as a cofactor. Acetylated. Deacetylation by the SIR2-homolog deacetylase activates the enzyme.

The enzyme catalyses acetate + ATP + CoA = acetyl-CoA + AMP + diphosphate. In terms of biological role, catalyzes the conversion of acetate into acetyl-CoA (AcCoA), an essential intermediate at the junction of anabolic and catabolic pathways. AcsA undergoes a two-step reaction. In the first half reaction, AcsA combines acetate with ATP to form acetyl-adenylate (AcAMP) intermediate. In the second half reaction, it can then transfer the acetyl group from AcAMP to the sulfhydryl group of CoA, forming the product AcCoA. The polypeptide is Acetyl-coenzyme A synthetase (Saccharophagus degradans (strain 2-40 / ATCC 43961 / DSM 17024)).